Here is a 78-residue protein sequence, read N- to C-terminus: MKSGIHPEYKKFLIKVESDVFETMSTHPTGEILMDVDFRKHPAWNKDSGNVVNQSNKSVSDFNKRFSGLSFGGKKEAS.

The protein belongs to the bacterial ribosomal protein bL31 family. Type A subfamily. Part of the 50S ribosomal subunit.

Its function is as follows. Binds the 23S rRNA. In Rickettsia felis (strain ATCC VR-1525 / URRWXCal2) (Rickettsia azadi), this protein is Large ribosomal subunit protein bL31 (rpmE).